Reading from the N-terminus, the 342-residue chain is Dual-specificity RNA methyltransferase RlmN (342 aa).

Catalysis depends on Glu-92, which acts as the Proton acceptor. Residues 98–329 (DLPRSTLCVS…THVRRSRGGE (232 aa)) form the Radical SAM core domain. A disulfide bond links Cys-105 and Cys-334. Positions 112, 116, and 119 each coordinate [4Fe-4S] cluster. S-adenosyl-L-methionine contacts are provided by residues 161 to 162 (GE), Ser-193, 215 to 217 (SLH), and Asn-291. Cys-334 (S-methylcysteine intermediate) is an active-site residue.

Belongs to the radical SAM superfamily. RlmN family. Requires [4Fe-4S] cluster as cofactor.

It is found in the cytoplasm. It catalyses the reaction adenosine(2503) in 23S rRNA + 2 reduced [2Fe-2S]-[ferredoxin] + 2 S-adenosyl-L-methionine = 2-methyladenosine(2503) in 23S rRNA + 5'-deoxyadenosine + L-methionine + 2 oxidized [2Fe-2S]-[ferredoxin] + S-adenosyl-L-homocysteine. The catalysed reaction is adenosine(37) in tRNA + 2 reduced [2Fe-2S]-[ferredoxin] + 2 S-adenosyl-L-methionine = 2-methyladenosine(37) in tRNA + 5'-deoxyadenosine + L-methionine + 2 oxidized [2Fe-2S]-[ferredoxin] + S-adenosyl-L-homocysteine. Functionally, specifically methylates position 2 of adenine 2503 in 23S rRNA and position 2 of adenine 37 in tRNAs. m2A2503 modification seems to play a crucial role in the proofreading step occurring at the peptidyl transferase center and thus would serve to optimize ribosomal fidelity. In Syntrophobacter fumaroxidans (strain DSM 10017 / MPOB), this protein is Dual-specificity RNA methyltransferase RlmN.